Reading from the N-terminus, the 210-residue chain is Oxygen-insensitive NADPH nitroreductase (210 aa).

Gly150–Gly155 lines the NADP(+) pocket.

Belongs to the nitroreductase family.

Functionally, reduction of a variety of nitroaromatic compounds using NADPH as source of reducing equivalents; two electrons are transferred. In Helicobacter pylori (strain J99 / ATCC 700824) (Campylobacter pylori J99), this protein is Oxygen-insensitive NADPH nitroreductase (rdxA).